The primary structure comprises 125 residues: MAKKNKKVVTQGIAHIHSTYQNTIVSFSDLKGNVFAWSSSGAIGYKGTKKKTPYAAGLAAAAAVEKAKEFGLKEVSILVKGVGPGKSTARKQIETSGFTIKDVKDVTPTPHNGTRPPKKILKREK.

The disordered stretch occupies residues 101–125; that stretch reads KDVKDVTPTPHNGTRPPKKILKREK. Residues 116–125 are compositionally biased toward basic residues; it reads PPKKILKREK.

This sequence belongs to the universal ribosomal protein uS11 family. As to quaternary structure, part of the 30S ribosomal subunit. Interacts with proteins S7 and S18. Binds to IF-3.

Its function is as follows. Located on the platform of the 30S subunit, it bridges several disparate RNA helices of the 16S rRNA. Forms part of the Shine-Dalgarno cleft in the 70S ribosome. This Mycoplasma sp protein is Small ribosomal subunit protein uS11.